A 724-amino-acid polypeptide reads, in one-letter code: uncharacterized protein (724 aa).

This is an uncharacterized protein from Treponema pallidum (strain Nichols).